The sequence spans 400 residues: Nicotinate phosphoribosyltransferase (400 aa).

H220 bears the Phosphohistidine; by autocatalysis mark.

Belongs to the NAPRTase family. Transiently phosphorylated on a His residue during the reaction cycle. Phosphorylation strongly increases the affinity for substrates and increases the rate of nicotinate D-ribonucleotide production. Dephosphorylation regenerates the low-affinity form of the enzyme, leading to product release.

The enzyme catalyses nicotinate + 5-phospho-alpha-D-ribose 1-diphosphate + ATP + H2O = nicotinate beta-D-ribonucleotide + ADP + phosphate + diphosphate. The protein operates within cofactor biosynthesis; NAD(+) biosynthesis; nicotinate D-ribonucleotide from nicotinate: step 1/1. Functionally, catalyzes the synthesis of beta-nicotinate D-ribonucleotide from nicotinate and 5-phospho-D-ribose 1-phosphate at the expense of ATP. The sequence is that of Nicotinate phosphoribosyltransferase from Salmonella schwarzengrund (strain CVM19633).